Here is a 260-residue protein sequence, read N- to C-terminus: MAVGKNKRISKGKKGGKKKAADPFSKKDWYDIKAPSLFITRNVGKTLVTRTQGTKIASEGLKHRVFEVSLADLQNDEDHSYRKIRLRAEDVQGKNVLTNFWGMDVTTDKLRSLVKKWQSLIEAHVDVKTTDNFTLRMFCIGFTKKRANQVKRTCYAQSSQIKQIRRKMREIMVTQAQTCDLKELVQKFIPESIGREIEKATSSIYPLQNVFIRKVKILKAPKFDIGKLMEVHGDYSEDVGVKLDRPAEEAAPEATEVIGA.

The segment covering 1–18 (MAVGKNKRISKGKKGGKK) has biased composition (basic residues). The segment at 1-22 (MAVGKNKRISKGKKGGKKKAAD) is disordered.

It belongs to the eukaryotic ribosomal protein eS1 family. Component of the small ribosomal subunit. Mature ribosomes consist of a small (40S) and a large (60S) subunit. The 40S subunit contains about 33 different proteins and 1 molecule of RNA (18S). The 60S subunit contains about 49 different proteins and 3 molecules of RNA (25S, 5.8S and 5S).

Its subcellular location is the cytoplasm. The polypeptide is Small ribosomal subunit protein eS1 (Helianthus annuus (Common sunflower)).